Here is a 234-residue protein sequence, read N- to C-terminus: Large ribosomal subunit protein uL1 (234 aa).

It belongs to the universal ribosomal protein uL1 family. Part of the 50S ribosomal subunit.

Binds directly to 23S rRNA. The L1 stalk is quite mobile in the ribosome, and is involved in E site tRNA release. Its function is as follows. Protein L1 is also a translational repressor protein, it controls the translation of the L11 operon by binding to its mRNA. This is Large ribosomal subunit protein uL1 from Desulfatibacillum aliphaticivorans.